A 221-amino-acid polypeptide reads, in one-letter code: N-(5'-phosphoribosyl)anthranilate isomerase (221 aa).

This sequence belongs to the TrpF family.

It carries out the reaction N-(5-phospho-beta-D-ribosyl)anthranilate = 1-(2-carboxyphenylamino)-1-deoxy-D-ribulose 5-phosphate. Its pathway is amino-acid biosynthesis; L-tryptophan biosynthesis; L-tryptophan from chorismate: step 3/5. The polypeptide is N-(5'-phosphoribosyl)anthranilate isomerase (Geobacillus thermodenitrificans (strain NG80-2)).